The chain runs to 199 residues: Large ribosomal subunit protein bL25 (199 aa).

Belongs to the bacterial ribosomal protein bL25 family. CTC subfamily. As to quaternary structure, part of the 50S ribosomal subunit; part of the 5S rRNA/L5/L18/L25 subcomplex. Contacts the 5S rRNA. Binds to the 5S rRNA independently of L5 and L18.

Functionally, this is one of the proteins that binds to the 5S RNA in the ribosome where it forms part of the central protuberance. The polypeptide is Large ribosomal subunit protein bL25 (Rickettsia akari (strain Hartford)).